Consider the following 237-residue polypeptide: Ribonuclease PH (237 aa).

Residues Arg-86 and 124-126 contribute to the phosphate site; that span reads GTR.

Belongs to the RNase PH family. As to quaternary structure, homohexameric ring arranged as a trimer of dimers.

The enzyme catalyses tRNA(n+1) + phosphate = tRNA(n) + a ribonucleoside 5'-diphosphate. In terms of biological role, phosphorolytic 3'-5' exoribonuclease that plays an important role in tRNA 3'-end maturation. Removes nucleotide residues following the 3'-CCA terminus of tRNAs; can also add nucleotides to the ends of RNA molecules by using nucleoside diphosphates as substrates, but this may not be physiologically important. Probably plays a role in initiation of 16S rRNA degradation (leading to ribosome degradation) during starvation. This is Ribonuclease PH from Methylorubrum populi (strain ATCC BAA-705 / NCIMB 13946 / BJ001) (Methylobacterium populi).